A 342-amino-acid chain; its full sequence is Ribosomal RNA small subunit methyltransferase C (342 aa).

It belongs to the methyltransferase superfamily. RsmC family. In terms of assembly, monomer.

The protein localises to the cytoplasm. The catalysed reaction is guanosine(1207) in 16S rRNA + S-adenosyl-L-methionine = N(2)-methylguanosine(1207) in 16S rRNA + S-adenosyl-L-homocysteine + H(+). In terms of biological role, specifically methylates the guanine in position 1207 of 16S rRNA in the 30S particle. The protein is Ribosomal RNA small subunit methyltransferase C of Hahella chejuensis (strain KCTC 2396).